Reading from the N-terminus, the 247-residue chain is Sugar fermentation stimulation protein homolog (247 aa).

The protein belongs to the SfsA family.

The sequence is that of Sugar fermentation stimulation protein homolog from Aeromonas salmonicida (strain A449).